Consider the following 265-residue polypeptide: Histidine racemase (265 aa).

Cysteine 67 serves as the catalytic Proton acceptor. Catalysis depends on cysteine 209, which acts as the Proton donor.

Belongs to the histidine racemase family. As to quaternary structure, homodimer.

It catalyses the reaction L-histidine = D-histidine. Its activity is regulated as follows. Activity is not affected by buffer composition (PO(4) or Tris), ions (SO(4)(2-), Mg(2+) and EDTA) or the PLP inhibitor hydroxylamine. However, the activity is hindered by iodoacetamide and Hg(2+), which are known inhibitors of enzymes with catalytic thiols. In terms of biological role, cofactor-independent isomerase that catalyzes the reversible conversion of L-histidine to D-histidine. Shows weak activity with L,L-lanthionine. The catalytic turnover is 10'000-fold faster with L-histidine than with L,L-lanthionine. May play a role in growth of F.nucleatum. This Fusobacterium nucleatum subsp. nucleatum (strain ATCC 25586 / DSM 15643 / BCRC 10681 / CIP 101130 / JCM 8532 / KCTC 2640 / LMG 13131 / VPI 4355) protein is Histidine racemase.